The chain runs to 523 residues: Occludin (523 aa).

Residues 1-20 (MSVRPFESPPPYRPDEFKPN) are disordered. Topologically, residues 1–66 (MSVRPFESPP…KWTSPPGVIR (66 aa)) are cytoplasmic. Positions 60 to 269 (SPPGVIRILS…IIVFAVKTRR (210 aa)) constitute an MARVEL domain. A helical transmembrane segment spans residues 67-87 (ILSMLVIVMCIAVFACVASTL). The Extracellular segment spans residues 88 to 140 (AWDRAYGTGIFGGSMNYPYGSGFGSYGGGFGGYGYGYGYGYGGYTDPRAAKGF). The helical transmembrane segment at 141–161 (LLAMAAFCFIASLVIFVTSVI) threads the bilayer. Over 162 to 173 (RSGMSRTRRYYL) the chain is Cytoplasmic. Residues 174–194 (IVIIVSAILGIMVFIATIVYI) form a helical membrane-spanning segment. The Extracellular portion of the chain corresponds to 195–244 (MGVNPTAQASGSMYGSQIYTICSQFYTPGGTGLYVDQYLYHYCVVDPQEA). A disulfide bond links Cys-216 and Cys-237. Residues 245–265 (IAIVLGFMIIVAFALIIVFAV) traverse the membrane as a helical segment. Residues 266 to 523 (KTRRKMDRYD…MVGDYDRRKT (258 aa)) are Cytoplasmic-facing. Ser-302 is subject to Phosphoserine. The tract at residues 302–338 (SAGTQDMPPPPSDYAERVDSPMAYSSNGKVNGKRSYP) is disordered. A Phosphothreonine modification is found at Thr-305. A phosphoserine mark is found at Ser-313, Ser-321, Ser-340, and Ser-360. Residues 363-408 (DFRQPRYSSNDNLETPSKRTPTKGKAGKAKRTDPDHYETDYTTGGE) are disordered. The segment covering 368 to 381 (RYSSNDNLETPSKR) has biased composition (polar residues). Tyr-369 is modified (phosphotyrosine). Residues Ser-370 and Ser-371 each carry the phosphoserine modification. Positions 382 to 391 (TPTKGKAGKA) are enriched in basic residues. Basic and acidic residues predominate over residues 392-401 (KRTDPDHYET). A phosphotyrosine mark is found at Tyr-399 and Tyr-403. Phosphothreonine; by PKC/PRKCH occurs at positions 404 and 405. Ser-409 bears the Phosphoserine mark. An OCEL domain is found at 415 to 523 (EDWLREYPPI…MVGDYDRRKT (109 aa)). The stretch at 433–489 (YKRNFDAGLQEYKSLLAELDEVNKELSRLDRELDDYREESEEYMAAADEYNRLKQVK) forms a coiled coil. Residue Ser-491 is modified to Phosphoserine.

The protein belongs to the ELL/occludin family. Interacts with TJP1/ZO1. Interacts with VAPA. Interacts with CLDN1, CLDN6, CLDN9, CLDN11, CLDN12 and CLDN17. Interacts with PLSCR1. Interacts with LSR, ILDR1 and ILDR2. Interacts with TJP2/ZO2. In terms of processing, dephosphorylated by PTPRJ.

The protein resides in the cell membrane. The protein localises to the cell junction. It is found in the tight junction. Its function is as follows. May play a role in the formation and regulation of the tight junction (TJ) paracellular permeability barrier. May be involved in the organization of actin in endothelial cells. The sequence is that of Occludin (Ocln) from Rattus norvegicus (Rat).